Consider the following 359-residue polypeptide: Protein FAM50 homolog (359 aa).

2 disordered regions span residues 122 to 150 (NLDD…EDQP) and 339 to 359 (PYDP…KSKK). The span at 123–136 (LDDDEEEEEEDDED) shows a compositional bias: acidic residues. The segment covering 137–150 (HDKKQLKIKQEDQP) has biased composition (basic and acidic residues).

It belongs to the FAM50 family.

This is Protein FAM50 homolog from Drosophila melanogaster (Fruit fly).